A 332-amino-acid polypeptide reads, in one-letter code: Myogenic-determination protein (332 aa).

Residues 22–54 (HNGYGQPTHPGYGFSAYSQQNPIAHPGQNPHQT) form a disordered region. One can recognise a bHLH domain in the interval 161-212 (DRRKAATMRERRRLRKVNEAFEILKRRTSSNPNQRLPKVEILRNAIEYIESL). Polar residues predominate over residues 293–309 (TTSPIQNKATPSASDTQ). The segment at 293–332 (TTSPIQNKATPSASDTQSPPSSGATAPTSLHVNFKRKCST) is disordered. A compositionally biased stretch (low complexity) spans 310 to 321 (SPPSSGATAPTS).

In terms of assembly, efficient DNA binding requires dimerization with another bHLH protein.

Its subcellular location is the nucleus. May play an important role in the early development of muscle. This chain is Myogenic-determination protein (nau), found in Drosophila melanogaster (Fruit fly).